The sequence spans 79 residues: Large ribosomal subunit protein bL31 (79 aa).

It belongs to the bacterial ribosomal protein bL31 family. Type A subfamily. As to quaternary structure, part of the 50S ribosomal subunit.

In terms of biological role, binds the 23S rRNA. In Rickettsia bellii (strain RML369-C), this protein is Large ribosomal subunit protein bL31 (rpmE).